The chain runs to 905 residues: A disintegrin and metalloproteinase with thrombospondin motifs 8 (905 aa).

Residues 1–28 form the signal peptide; that stretch reads MLRDPTTTGWPPLLLLLLQLPPPPLVCG. A propeptide spanning residues 29-228 is cleaved from the precursor; that stretch reads APAGPGTGAQ…PFGSKTRSKR (200 aa). Disordered regions lie at residues 139–163 and 186–225; these read PQGAGDSLDQPHRLQRWGPGQRRED and NGQGQERSDNEEDRKQDKEGLLKETEDSRKVPPPFGSKTR. The segment covering 191–215 has biased composition (basic and acidic residues); that stretch reads ERSDNEEDRKQDKEGLLKETEDSRK. A Peptidase M12B domain is found at 234–444; that stretch reads RFVETLLVAD…GHGDCLLDAP (211 aa). 10 disulfides stabilise this stretch: C309–C362, C338–C344, C356–C439, C394–C423, C478–C502, C487–C523, C517–C528, C554–C591, C558–C596, and C569–C581. Residue H378 coordinates Zn(2+). E379 is an active-site residue. 2 residues coordinate Zn(2+): H382 and H388. N-linked (GlcNAc...) asparagine glycosylation is found at N415, N480, and N506. A Disintegrin domain is found at 453 to 541; sequence GLPGHSTLYE…EDVENPKAVV (89 aa). Residues 542–597 enclose the TSP type-1 1 domain; that stretch reads DGDWGPWRPWGQCSRTCGGGIQFSNRECDNPMPQNGGRFCLGERVKYQSCNTEECP. A glycan (N-linked (GlcNAc...) asparagine) is linked at N615. The spacer stretch occupies residues 706-847; that stretch reads RKISGSFTPF…RATTNIIQSL (142 aa). One can recognise a TSP type-1 2 domain in the interval 848–904; that stretch reads PSAEWVLGDWSECPSTCRGSWQRRTVECRDPSGQASDTCDEALKPEDAKPCGSQPCP. Positions 877 to 905 are disordered; sequence DPSGQASDTCDEALKPEDAKPCGSQPCPL.

It depends on Zn(2+) as a cofactor. The precursor is cleaved by a furin endopeptidase. In terms of processing, glycosylated. Can be O-fucosylated by POFUT2 on a serine or a threonine residue found within the consensus sequence C1-X(2)-(S/T)-C2-G of the TSP type-1 repeat domains where C1 and C2 are the first and second cysteine residue of the repeat, respectively. Fucosylated repeats can then be further glycosylated by the addition of a beta-1,3-glucose residue by the glucosyltransferase, B3GALTL. Fucosylation mediates the efficient secretion of ADAMTS family members. Can also be C-glycosylated with one or two mannose molecules on tryptophan residues within the consensus sequence W-X-X-W of the TPRs, and N-glycosylated. These other glycosylations can also facilitate secretion. In terms of tissue distribution, expressed specifically in adult lung and heart and low expression during mouse development.

The protein resides in the secreted. The protein localises to the extracellular space. It is found in the extracellular matrix. Functionally, has anti-angiogenic properties. The polypeptide is A disintegrin and metalloproteinase with thrombospondin motifs 8 (Adamts8) (Mus musculus (Mouse)).